The sequence spans 414 residues: CinA-like protein (414 aa).

It belongs to the CinA family.

The polypeptide is CinA-like protein (Koribacter versatilis (strain Ellin345)).